The sequence spans 334 residues: Aromatic O-demethylase, reductase subunit (334 aa).

Residues 1-91 (MTFAVSVGGR…DTEVRSTADA (91 aa)) form the 2Fe-2S ferredoxin-type domain. [2Fe-2S] cluster-binding residues include Cys35, Cys40, Cys43, and Cys75. One can recognise an FAD-binding FR-type domain in the interval 98–198 (LRDLTATVLE…TGPLGDFHLP (101 aa)). FAD is bound by residues 145–148 (RQYS), 162–164 (HVR), 170–172 (VAT), Thr215, Phe330, and Ser334.

In terms of assembly, monomer. Forms a heterodimer with GcoA. It depends on FAD as a cofactor. Requires [2Fe-2S] cluster as cofactor.

The enzyme catalyses 2 oxidized [cytochrome P450] + NADH = 2 reduced [cytochrome P450] + NAD(+) + H(+). It functions in the pathway aromatic compound metabolism. Part of a two-component P450 system that efficiently O-demethylates diverse aromatic substrates such as guaiacol and a wide variety of lignin-derived monomers. Is likely involved in lignin degradation, allowing Amycolatopsis sp. ATCC 39116 to catabolize plant biomass. GcoB transfers electrons from NADH to the cytochrome P450 subunit GcoA. Highly prefers NADH over NADPH as the electron donor. This chain is Aromatic O-demethylase, reductase subunit, found in Amycolatopsis sp. (strain ATCC 39116 / 75iv2).